Reading from the N-terminus, the 238-residue chain is Deoxyribose-phosphate aldolase (238 aa).

The active-site Proton donor/acceptor is aspartate 104. Lysine 168 acts as the Schiff-base intermediate with acetaldehyde in catalysis. Lysine 197 serves as the catalytic Proton donor/acceptor.

This sequence belongs to the DeoC/FbaB aldolase family. DeoC type 1 subfamily.

The protein resides in the cytoplasm. The catalysed reaction is 2-deoxy-D-ribose 5-phosphate = D-glyceraldehyde 3-phosphate + acetaldehyde. Its pathway is carbohydrate degradation; 2-deoxy-D-ribose 1-phosphate degradation; D-glyceraldehyde 3-phosphate and acetaldehyde from 2-deoxy-alpha-D-ribose 1-phosphate: step 2/2. Functionally, catalyzes a reversible aldol reaction between acetaldehyde and D-glyceraldehyde 3-phosphate to generate 2-deoxy-D-ribose 5-phosphate. The protein is Deoxyribose-phosphate aldolase of Bacteroides thetaiotaomicron (strain ATCC 29148 / DSM 2079 / JCM 5827 / CCUG 10774 / NCTC 10582 / VPI-5482 / E50).